The chain runs to 1555 residues: Regulating synaptic membrane exocytosis protein 2 (1555 aa).

The disordered stretch occupies residues 1–35; that stretch reads MSAPLGPRGRPAPTPAASQPPPQPEMPDLSHLTEE. A compositionally biased stretch (pro residues) spans 10–25; the sequence is RPAPTPAASQPPPQPE. The RabBD domain maps to 26–154; sequence MPDLSHLTEE…TKSGAWFYNS (129 aa). The FYVE-type zinc-finger motif lies at 86-142; it reads KGDAPTCGICHKTKFADGCGHNCSYCQTKFCARCGGRVSLRSNKVMWVCNLCRKQQE. Cys92, Cys95, Cys108, Cys111, Cys116, Cys119, Cys134, and Cys137 together coordinate Zn(2+). Positions 154-163 are enriched in polar residues; that stretch reads SGSNTPQQPD. The tract at residues 154-530 is disordered; that stretch reads SGSNTPQQPD…STPEYTSCDD (377 aa). The segment covering 170–185 has biased composition (basic and acidic residues); it reads LRSEEAPQEKKAKLHE. Residues 259–268 are compositionally biased toward polar residues; that stretch reads YVPSDSTMPR. Basic and acidic residues-rich tracts occupy residues 287 to 298, 317 to 335, 351 to 370, and 379 to 403; these read EPDHLNYRDSNR, RDEY…RYRS, EQMR…RHSD, and EDSR…RRAA. A Phosphoserine modification is found at Ser369. A compositionally biased stretch (polar residues) spans 418-432; that stretch reads AQGQSSYPQRTTNHS. Basic and acidic residues predominate over residues 444–461; it reads DRPELRRADSLRKQHHLD. The span at 479 to 490 shows a compositional bias: polar residues; sequence RNDSLSSDQSES. Residues 497 to 506 show a composition bias toward basic residues; that stretch reads RPHKSKKGGK. Residues 590–676 form the PDZ domain; it reads DGSVPRDSGA…EPQVELVVSR (87 aa). At Thr611 the chain carries Phosphothreonine. Residues 682-716 are disordered; the sequence is PRIPDSTHAQLESSSSSFESQKMDRPSISVTSPMS. Ser713 and Ser716 each carry phosphoserine. A C2 1 domain is found at 743–866; that stretch reads FVPRVQIKLW…ALLDDEPHWY (124 aa). 5 disordered regions span residues 877–913, 935–1145, 1180–1207, 1268–1288, and 1307–1332; these read PLPH…VSDY, STLS…KRNS, YRSG…DVSA, LEKN…TSGK, and KSRS…QRST. The span at 935–953 shows a compositional bias: polar residues; it reads STLSVPEQVMSSNHCSPSG. Basic and acidic residues-rich tracts occupy residues 996-1014 and 1025-1071; these read RMDR…RDSH and QTSE…ERAD. Positions 1092-1114 are enriched in low complexity; it reads ALSRSHPRTGSVQTSPSSTPVTG. Position 1106 is a phosphoserine (Ser1106). 2 stretches are compositionally biased toward basic and acidic residues: residues 1128–1141 and 1180–1190; these read TLER…DSTR and YRSGWDPHRGA. 2 positions are modified to phosphoserine: Ser1200 and Ser1276. Residues 1401 to 1519 form the C2 2 domain; sequence AMGDIQVGMM…ELSNMVIGWF (119 aa). Residues Ser1540 and Ser1543 each carry the phosphoserine modification.

As to quaternary structure, heterodimer with PCLO. Part of a ternary complex involving PCLO and EPAC2. Interacts with RAB3C, RAB3D and RAB26. Binds RAB3A and RAB3B that have been activated by GTP-binding. Interacts with TSPOAP1 and RIMBP2. Interacts with PPFIA3 and PPFIA4. Interacts via its zinc finger with the first C2 domain of UNC13A. Forms a complex consisting of UNC13A, RIMS2 and RAB3A. Highly expressed in hippocampus, brain cortex, cerebellum and olfactory bulb. Detected at intermediate levels in midbrain, hindbrain and spinal cord, and at low levels in testis.

The protein resides in the cell membrane. The protein localises to the synapse. It is found in the presynaptic cell membrane. Its function is as follows. Rab effector involved in exocytosis. May act as scaffold protein. Plays a role in dendrite formation by melanocytes. This Rattus norvegicus (Rat) protein is Regulating synaptic membrane exocytosis protein 2 (Rims2).